The primary structure comprises 378 residues: Zinc transporter 7 (378 aa).

Residues 1-37 (MLPLSIKDDEYKPPRLNLFRKMSGWFRSILADKTSRN) lie on the Cytoplasmic side of the membrane. The helical transmembrane segment at 38–58 (LFFFLCLNLSFAFVELLYGVW) threads the bilayer. The Lumenal segment spans residues 59–67 (SNSLGLISD). Residues 68–88 (SFHMFFDCTALLAGLAASVIS) traverse the membrane as a helical segment. Residues 89-102 (KWRSNDAFSYGYVR) lie on the Cytoplasmic side of the membrane. A helical transmembrane segment spans residues 103–123 (AEVLAGFVNGLFLIFTAFFIF). At 124-140 (SEGVERALEPPDVHHER) the chain is on the lumenal side. The chain crosses the membrane as a helical span at residues 141–161 (LLPVSILGFIVNLIGIFVFQH). A his-rich loop region spans residues 161 to 223 (HGGHGHSHGS…HGQDYCHDDH (63 aa)). Residues 162 to 238 (GGHGHSHGSG…TGSSKQILQG (77 aa)) lie on the Cytoplasmic side of the membrane. The segment at 185–214 (HGHSHRGHGHSHEHKHGHTHDHGHSHGLSH) is disordered. The span at 186 to 211 (GHSHRGHGHSHEHKHGHTHDHGHSHG) shows a compositional bias: basic residues. A helical membrane pass occupies residues 239 to 259 (VFLHIVADTLGSIGVIISAIL). Over 260–264 (MQNYG) the chain is Lumenal. A helical membrane pass occupies residues 265–285 (LMIADPICSMLIALLIGVSIV). Topologically, residues 286–378 (PLLKESIGIL…LYIQIDVAAM (93 aa)) are cytoplasmic.

Belongs to the cation diffusion facilitator (CDF) transporter (TC 2.A.4) family. SLC30A subfamily. As to quaternary structure, homooligomer.

It is found in the golgi apparatus membrane. The protein resides in the cytoplasmic vesicle. The protein localises to the golgi apparatus. Its subcellular location is the trans-Golgi network. It localises to the sarcoplasmic reticulum. It is found in the mitochondrion. It carries out the reaction Zn(2+)(in) = Zn(2+)(out). Its function is as follows. Zinc ion transporter mediating zinc entry from the cytosol into the lumen of organelles along the secretory pathway. By contributing to zinc ion homeostasis within the early secretory pathway, regulates the activation and folding of enzymes like alkaline phosphatases. The protein is Zinc transporter 7 (SLC30A7) of Gallus gallus (Chicken).